Here is a 215-residue protein sequence, read N- to C-terminus: Probable transaldolase (215 aa).

Catalysis depends on Lys-83, which acts as the Schiff-base intermediate with substrate.

It belongs to the transaldolase family. Type 3B subfamily.

The protein localises to the cytoplasm. The catalysed reaction is D-sedoheptulose 7-phosphate + D-glyceraldehyde 3-phosphate = D-erythrose 4-phosphate + beta-D-fructose 6-phosphate. Its pathway is carbohydrate degradation; pentose phosphate pathway; D-glyceraldehyde 3-phosphate and beta-D-fructose 6-phosphate from D-ribose 5-phosphate and D-xylulose 5-phosphate (non-oxidative stage): step 2/3. In terms of biological role, transaldolase is important for the balance of metabolites in the pentose-phosphate pathway. The chain is Probable transaldolase from Bdellovibrio bacteriovorus (strain ATCC 15356 / DSM 50701 / NCIMB 9529 / HD100).